Here is a 1223-residue protein sequence, read N- to C-terminus: Rho family-interacting cell polarization regulator 1 (1223 aa).

S22 is modified (phosphoserine). Positions 89–114 (LTAYLEVHQQEQEKLQGQIRESKRNS) form a coiled coil. A phosphoserine mark is found at S349 and S351. The residue at position 355 (T355) is a Phosphothreonine. The disordered stretch occupies residues 375-411 (NGTAWSLSSESSDDSSSPQLSGTARHSPAPRPLVQQP). Positions 380-395 (SLSSESSDDSSSPQLS) are enriched in low complexity. 2 positions are modified to phosphoserine: S456 and S459. Disordered stretches follow at residues 475-769 (ESLA…APQH) and 856-889 (FLNE…SPSA). 2 stretches are compositionally biased toward low complexity: residues 505–523 (GHSA…PTST) and 546–564 (PGPT…TTTH). Over residues 565–592 (SAPSPLTHTTTGSTHKPIISTLTTTGPT) the composition is skewed to polar residues. 2 stretches are compositionally biased toward low complexity: residues 601 to 650 (TTTS…PTPS) and 659 to 675 (TSPT…TTSP). Polar residues predominate over residues 680-695 (VSPSTSLELATLSSPS). Residues 858–867 (NEDEDEDNDV) show a composition bias toward acidic residues. Residues S874 and S875 each carry the phosphoserine modification.

This sequence belongs to the RIPOR family. In terms of assembly, interacts (via N-terminus) with RHOA (GTP-bound form); this interaction links active RHOA to STK24 and STK26 kinases. Interacts with RHOB. Interacts with RHOC. Interacts (via C-terminus) with PDCD10; this interaction occurs in a Rho-independent manner. Interacts (via C-terminus) with STK24; this interaction occurs in a PDCD10-dependent and Rho-independent manner. Interacts (via C-terminus) with STK26; this interaction occurs in a PDCD10-dependent and Rho-independent manner. Interacts (via N-terminus) with 14-3-3 proteins; these interactions occur in a Rho-dependent manner.

The protein localises to the cytoplasm. It is found in the golgi apparatus. Its function is as follows. Downstream effector protein for Rho-type small GTPases that plays a role in cell polarity and directional migration. Acts as an adapter protein, linking active Rho proteins to STK24 and STK26 kinases, and hence positively regulates Golgi reorientation in polarized cell migration upon Rho activation. Involved in the subcellular relocation of STK26 from the Golgi to cytoplasm punctae in a Rho- and PDCD10-dependent manner upon serum stimulation. This chain is Rho family-interacting cell polarization regulator 1 (RIPOR1), found in Homo sapiens (Human).